Reading from the N-terminus, the 347-residue chain is Microfibril-associated glycoprotein 3 (347 aa).

Residues 1-22 (MKLHYCLCILLVVTFVPTALVL) form the signal peptide. The Extracellular portion of the chain corresponds to 23-139 (EDVTPLGTNQ…TLRVIFTSGD (117 aa)). N-linked (GlcNAc...) asparagine glycans are attached at residues Asn31, Asn36, Asn63, and Asn103. Residues 47-130 (AGSYSGDDVI…SPTRASYSVT (84 aa)) form the Ig-like C2-type domain. The cysteines at positions 68 and 117 are disulfide-linked. Residues 140–160 (MSVYYMVVCLIAFTITLILNV) traverse the membrane as a helical segment. Residues 161–347 (TRLCLMSTHL…SAEGSTHHRE (187 aa)) lie on the Cytoplasmic side of the membrane. The segment at 280-347 (NPELGRSNSP…SAEGSTHHRE (68 aa)) is disordered. A compositionally biased stretch (polar residues) spans 311–331 (VHLQSETKSIGTDSQDSSHFS).

Glycosylated.

It localises to the cell membrane. In terms of biological role, component of the elastin-associated microfibrils. The protein is Microfibril-associated glycoprotein 3 (Mfap3) of Rattus norvegicus (Rat).